Here is a 349-residue protein sequence, read N- to C-terminus: MSTLELHHIGKSYQSVMVLDRIDLHVPPGSRTAIVGPSGSGKTTLLRIIAGFETPDAGKVILQGKAMFDGTTYVPAHKRGIGFVPQDGALFPHFTVAGNIGYGLKGSQRDKERRINELMDMVALDRRLSALWPHEISGGQQQRVALARALAQRPVLMLLDEPFSALDTALRASTRKAVAELLSEANIASILVTHDQTEALSFADQVAVMRAGKLAHVGPPQELYLRPVDEPTATFLGETLMLTAQLGTGLAHCALGQVKVDNPHRRGEARIMLRPEQITLTPLRPEQYNAASCLAKVIAIDFAGFISTLTLQIISSGETIEIKTISREDLHVGLTVGLDIMGQAHIFAE.

Residues leucine 4–leucine 236 enclose the ABC transporter domain. Residue glycine 36–threonine 43 participates in ATP binding.

The protein belongs to the ABC transporter superfamily. Fe(3+) ion importer (TC 3.A.1.10) family. The complex is composed of two ATP-binding proteins (FbpC), two transmembrane proteins (FbpB) and a solute-binding protein (FbpA).

It is found in the cell inner membrane. The catalysed reaction is Fe(3+)(out) + ATP + H2O = Fe(3+)(in) + ADP + phosphate + H(+). Functionally, part of the ABC transporter complex FbpABC involved in Fe(3+) ions import. Responsible for energy coupling to the transport system. The protein is Fe(3+) ions import ATP-binding protein FbpC of Yersinia pestis bv. Antiqua (strain Antiqua).